The chain runs to 314 residues: Diisopropyl-fluorophosphatase (314 aa).

The Ca(2+) site is built by glutamate 21, asparagine 120, asparagine 175, aspartate 229, aspartate 232, leucine 273, and histidine 274. Catalysis depends on histidine 287, which acts as the Proton acceptor.

Monomer. It depends on Ca(2+) as a cofactor.

The catalysed reaction is diisopropyl fluorophosphate + H2O = diisopropyl phosphate + fluoride + 2 H(+). With respect to regulation, inhibited by chelating agents. Biological function and substrate unknown. However, it is capable of acting on phosphorus anhydride bonds (such as phosphorus-halide and phosphorus-cyanide) in organophosphorus compounds (including nerve gases). The protein is Diisopropyl-fluorophosphatase of Loligo vulgaris (Common European squid).